We begin with the raw amino-acid sequence, 1406 residues long: MDMVENADSLQAQERKDILMKYDKGHRAGLPEDKGPEPVGINSSIDRFGILHETELPPVTAREAKKIRREMTRTSKWMEMLGEWETYKHSSKLIDRVYKGIPMNIRGPVWSVLLNIQEIKLKNPGRYQIMKERGKRSSEHIHHIDLDVRTTLRNHVFFRDRYGAKQRELFYILLAYSEYNPEVGYCRDLSHITALFLLYLPEEDAFWALVQLLASERHSLPGFHSPNGGTVQGLQDQQEHVVPKSQPKTMWHQDKEGLCGQCASLGCLLRNLIDGISLGLTLRLWDVYLVEGEQVLMPITSIALKVQQKRLMKTSRCGLWARLRNQFFDTWAMNDDTVLKHLRASTKKLTRKQGDLPPPAKREQGSLAPRPVPASRGGKTLCKGYRQAPPGPPAQFQRPICSASPPWASRFSTPCPGGAVREDTYPVGTQGVPSLALAQGGPQGSWRFLEWKSMPRLPTDLDIGGPWFPHYDFEWSCWVRAISQEDQLATCWQAEHCGEVHNKDMSWPEEMSFTANSSKIDRQKVPTEKGATGLSNLGNTCFMNSSIQCVSNTQPLTQYFISGRHLYELNRTNPIGMKGHMAKCYGDLVQELWSGTQKSVAPLKLRRTIAKYAPKFDGFQQQDSQELLAFLLDGLHEDLNRVHEKPYVELKDSDGRPDWEVAAEAWDNHLRRNRSIIVDLFHGQLRSQVKCKTCGHISVRFDPFNFLSLPLPMDSYMDLEITVIKLDGTTPVRYGLRLNMDEKYTGLKKQLRDLCGLNSEQILLAEVHDSNIKNFPQDNQKVQLSVSGFLCAFEIPVPSSPISASSPTQIDFSSSPSTNGMFTLTTNGDLPKPIFIPNGMPNTVVPCGTEKNFTNGMVNGHMPSLPDSPFTGYIIAVHRKMMRTELYFLSPQENRPSLFGMPLIVPCTVHTRKKDLYDAVWIQVSWLARPLPPQEASIHAQDRDNCMGYQYPFTLRVVQKDGNSCAWCPQYRFCRGCKIDCGEDRAFIGNAYIAVDWHPTALHLRYQTSQERVVDKHESVEQSRRAQAEPINLDSCLRAFTSEEELGESEMYYCSKCKTHCLATKKLDLWRLPPFLIIHLKRFQFVNDQWIKSQKIVRFLRESFDPSAFLVPRDPALCQHKPLTPQGDELSKPRILAREVKKVDAQSSAGKEDMLLSKSPSSLSANISSSPKGSPSSSRKSGTSCPSSKNSSPNSSPRTLGRSKGRLRLPQIGSKNKPSSSKKNLDASKENGAGQICELADALSRGHMRGGSQPELVTPQDHEVALANGFLYEHEACGNGCGDGYSNGQLGNHSEEDSTDDQREDTHIKPIYNLYAISCHSGILSGGHYITYAKNPNCKWYCYNDSSCEELHPDEIDTDSAYILFYEQQGIDYAQFLPKIDGKKMADTSSTDEDSESDYEKYSMLQ.

Positions glycine 100–glycine 292 constitute a Rab-GAP TBC domain. The disordered stretch occupies residues lysine 348–threonine 380. The USP domain occupies threonine 532–glutamine 1369. The active-site Nucleophile is the cysteine 541. The tract at residues histidine 1120–asparagine 1231 is disordered. Residues glutamate 1129–leucine 1155 show a composition bias toward basic and acidic residues. Residues leucine 1156–proline 1197 show a composition bias toward low complexity. The Proton acceptor role is filled by histidine 1328. The tract at residues lysine 1384 to glutamine 1406 is disordered.

The protein belongs to the peptidase C19 family. Interacts with RAC1 and CDC42. Interacts (via Rab-GAP TBC domain) with ARF6. Interacts with calmodulin (CALM1, CALM2 and/or CALM3); the interaction is calcium-dependent. Monubiquitinated; ubiquitination is calmodulin and calcium dependent. In terms of tissue distribution, testis specific. Expressed in various cancer cell lines.

It localises to the cell membrane. It is found in the cytoplasm. The protein localises to the endosome. It catalyses the reaction Thiol-dependent hydrolysis of ester, thioester, amide, peptide and isopeptide bonds formed by the C-terminal Gly of ubiquitin (a 76-residue protein attached to proteins as an intracellular targeting signal).. Its function is as follows. Deubiquitinase with an ATP-independent isopeptidase activity, cleaving at the C-terminus of the ubiquitin moiety. Catalyzes its own deubiquitination. In vitro, isoform 2, but not isoform 3, shows deubiquitinating activity. Promotes plasma membrane localization of ARF6 and selectively regulates ARF6-dependent endocytic protein trafficking. Is able to initiate tumorigenesis by inducing the production of matrix metalloproteinases following NF-kappa-B activation. May act as a GTPase-activating protein for RAB3A. This Homo sapiens (Human) protein is Ubiquitin carboxyl-terminal hydrolase 6 (USP6).